We begin with the raw amino-acid sequence, 516 residues long: Homeobox protein 6 (516 aa).

Low complexity predominate over residues 22-31 (NYDFDNKNNS). Disordered stretches follow at residues 22 to 140 (NYDF…PNCN), 200 to 256 (SLNN…SSPS), and 268 to 348 (DEND…NNGD). The segment covering 32–41 (IGGGGGGGGS) has biased composition (gly residues). Composition is skewed to low complexity over residues 42–59 (SSSR…SSSG), 66–78 (SNSS…IINS), and 101–132 (TTTT…NSSS). A compositionally biased stretch (low complexity) spans 284-346 (NNNNNNNNNN…NNNNTNTNNN (63 aa)). 2 DNA-binding regions (homeobox) span residues 362-421 (KSGQ…SKSG) and 424-483 (SYAK…NKLS). The disordered stretch occupies residues 483–516 (SSKAIQDKDNQDNDNNNSNNNENNDDSYSDEGLF). Low complexity predominate over residues 495-504 (NDNNNSNNNE). A compositionally biased stretch (acidic residues) spans 505 to 516 (NNDDSYSDEGLF).

It is found in the nucleus. In terms of biological role, putative transcription factor. The chain is Homeobox protein 6 (hbx6) from Dictyostelium discoideum (Social amoeba).